A 709-amino-acid chain; its full sequence is Polyribonucleotide nucleotidyltransferase (709 aa).

Positions 485 and 491 each coordinate Mg(2+). Residues 552 to 611 enclose the KH domain; the sequence is PRIYTMKIDPKKIKDVIGKGGATIRSLTEETGTSIDIDDDGTVKIAAVDSNAAKNVMGRI. The 69-residue stretch at 621–689 folds into the S1 motif domain; sequence GAIYKGKVTR…RQGRIRLTMK (69 aa).

The protein belongs to the polyribonucleotide nucleotidyltransferase family. As to quaternary structure, component of the RNA degradosome, which is a multiprotein complex involved in RNA processing and mRNA degradation. Mg(2+) is required as a cofactor.

It localises to the cytoplasm. The catalysed reaction is RNA(n+1) + phosphate = RNA(n) + a ribonucleoside 5'-diphosphate. Its function is as follows. Involved in mRNA degradation. Catalyzes the phosphorolysis of single-stranded polyribonucleotides processively in the 3'- to 5'-direction. This is Polyribonucleotide nucleotidyltransferase from Haemophilus influenzae (strain 86-028NP).